A 98-amino-acid chain; its full sequence is NADH-ubiquinone oxidoreductase chain 4L (98 aa).

The next 3 helical transmembrane spans lie at M1–T21, S28–I48, and L61–I81.

This sequence belongs to the complex I subunit 4L family. In terms of assembly, core subunit of respiratory chain NADH dehydrogenase (Complex I) which is composed of 45 different subunits.

It localises to the mitochondrion inner membrane. It carries out the reaction a ubiquinone + NADH + 5 H(+)(in) = a ubiquinol + NAD(+) + 4 H(+)(out). Functionally, core subunit of the mitochondrial membrane respiratory chain NADH dehydrogenase (Complex I) which catalyzes electron transfer from NADH through the respiratory chain, using ubiquinone as an electron acceptor. Part of the enzyme membrane arm which is embedded in the lipid bilayer and involved in proton translocation. The polypeptide is NADH-ubiquinone oxidoreductase chain 4L (MT-ND4L) (Monodelphis domestica (Gray short-tailed opossum)).